A 146-amino-acid polypeptide reads, in one-letter code: Large ribosomal subunit protein uL15 (146 aa).

A disordered region spans residues 1–56 (MRLHDLRPVPGSRQKPTRKGQGIGSGLGKTAGRGQKGQKARSGGGVRPGFEGGQMP). 2 stretches are compositionally biased toward gly residues: residues 21–35 (QGIG…GRGQ) and 42–52 (SGGGVRPGFEG).

It belongs to the universal ribosomal protein uL15 family. As to quaternary structure, part of the 50S ribosomal subunit.

In terms of biological role, binds to the 23S rRNA. The protein is Large ribosomal subunit protein uL15 of Carboxydothermus hydrogenoformans (strain ATCC BAA-161 / DSM 6008 / Z-2901).